The primary structure comprises 238 residues: Endothelial protein C receptor (238 aa).

An N-terminal signal peptide occupies residues methionine 1–cysteine 17. Residues serine 18 to serine 210 are Extracellular-facing. N-linked (GlcNAc...) asparagine glycosylation is found at asparagine 47, asparagine 64, asparagine 136, and asparagine 172. A disulfide bond links cysteine 118 and cysteine 186. The helical transmembrane segment at leucine 211–leucine 231 threads the bilayer. The Cytoplasmic segment spans residues cysteine 232 to cysteine 238.

In terms of processing, N-glycosylated. A soluble form exists; probably released by a metalloprotease. Seems to have the same activity as the membrane-bound form. In terms of tissue distribution, expressed strongly in the endothelial cells of arteries and veins in heart and lung, less intensely in capillaries in the lung and skin, and not at all in the endothelium of small vessels of the liver and kidney.

The protein resides in the membrane. Its function is as follows. Binds activated protein C. Enhances protein C activation by the thrombin-thrombomodulin complex; plays a role in the protein C pathway controlling blood coagulation. The protein is Endothelial protein C receptor (PROCR) of Homo sapiens (Human).